Here is a 501-residue protein sequence, read N- to C-terminus: Ribose import ATP-binding protein RbsA (501 aa).

2 ABC transporter domains span residues 5 to 241 (LQLK…VGRK) and 252 to 495 (APGE…VGKL). Residue 37 to 44 (GENGAGKS) participates in ATP binding.

It belongs to the ABC transporter superfamily. Ribose importer (TC 3.A.1.2.1) family. The complex is composed of an ATP-binding protein (RbsA), two transmembrane proteins (RbsC) and a solute-binding protein (RbsB).

The protein localises to the cell inner membrane. It catalyses the reaction D-ribose(out) + ATP + H2O = D-ribose(in) + ADP + phosphate + H(+). Functionally, part of the ABC transporter complex RbsABC involved in ribose import. Responsible for energy coupling to the transport system. This chain is Ribose import ATP-binding protein RbsA, found in Salmonella typhimurium (strain LT2 / SGSC1412 / ATCC 700720).